The sequence spans 1675 residues: Clathrin heavy chain 1 (1675 aa).

Residue alanine 2 is modified to N-acetylalanine. Residues 2–479 (AQILPIRFQE…VDPTLALSVY (478 aa)) are globular terminal domain. WD40-like repeat stretches follow at residues 24–67 (NIGF…RPIS), 68–107 (ADSA…MTDD), 108–149 (VTFW…SSLA), 150–195 (GCQI…QPIE), 196–257 (GHAA…PEAQ), 258–301 (NDFP…ISGE), and 302–330 (TIFV…VCVE). Position 67 is a phosphoserine (serine 67). A Phosphothreonine modification is found at threonine 105. Tyrosine 184 carries the post-translational modification Phosphotyrosine. The residue at position 394 (threonine 394) is a Phosphothreonine. The binding site for the uncoating ATPase, involved in lattice disassembly stretch occupies residues 449 to 465 (EKWLKEDKLECSEELGD). Positions 480-523 (LRANVPNKVIQCFAETGQVQKIVLYAKKVGYTPDWIFLLRNVMR) are flexible linker. The interval 524–634 (ISPDQGQQFA…RALEHFTDLY (111 aa)) is distal segment. Residues 524 to 1675 (ISPDQGQQFA…QPQPGFGYSM (1152 aa)) form a heavy chain arm region. CHCR repeat units lie at residues 537–683 (VQDE…QIWV), 686–828 (ASKY…SEDV), 833–972 (ILVV…PLID), 979–1124 (LSET…VKEA), 1128–1269 (YIKA…FRLA), 1274–1420 (LHIV…LLLN), and 1423–1566 (LMVL…RECF). Tyrosine 634 carries the phosphotyrosine modification. Residues 639 to 1675 (AVVHTHLLNP…QPQPGFGYSM (1037 aa)) form a proximal segment region. Lysine 737 carries the N6-succinyllysine modification. Residue lysine 856 is modified to N6-acetyllysine. Tyrosine 899 is modified (phosphotyrosine). The residue at position 1167 (serine 1167) is a Phosphoserine. The residue at position 1206 (tyrosine 1206) is a Phosphotyrosine. An involved in binding clathrin light chain region spans residues 1213-1522 (AAKLLYNNVS…YLFKGNNRWK (310 aa)). Serine 1229 bears the Phosphoserine mark. Lysine 1441 is subject to N6-acetyllysine; alternate. Lysine 1441 is modified (N6-succinyllysine; alternate). Phosphotyrosine occurs at positions 1477 and 1487. Serine 1494 bears the Phosphoserine mark. Lysine 1501 carries the N6-acetyllysine modification. The trimerization stretch occupies residues 1550–1675 (AEELLQWFLQ…QPQPGFGYSM (126 aa)).

Belongs to the clathrin heavy chain family. Clathrin triskelions, composed of 3 heavy chains and 3 light chains, are the basic subunits of the clathrin coat. In the presence of light chains, hub assembly is influenced by both the pH and the concentration of calcium. Interacts with HIP1. Interacts with DENND1A, DENND1B and DENND1C. Interacts with OCRL. Interacts with ERBB2. Interacts with FKBP6. Interacts with CKAP5 and TACC3 forming the TACC3/ch-TOG/clathrin complex located at spindle inter-microtubules bridges; the complex implicates clathrin triskelions; TACC3 and CLTC are proposed to form a composite microtubule interaction surface. Interacts with ATG16L1 (via N-terminus). Interacts with RFTN1; the interaction occurs in response to pathogens. Interacts with USP2 isoform 2. Interacts with TMEM106B (via N-terminus). Interacts with DNAJC6; this interaction produces a local change in heavy-chain contacts, creating a detectable global distortion of the clathrin coat and leads to the recruitment of HSPA8.

Its subcellular location is the cytoplasmic vesicle membrane. The protein resides in the membrane. The protein localises to the coated pit. It localises to the melanosome. It is found in the cytoplasm. Its subcellular location is the cytoskeleton. The protein resides in the spindle. Clathrin is the major protein of the polyhedral coat of coated pits and vesicles. Two different adapter protein complexes link the clathrin lattice either to the plasma membrane or to the trans-Golgi network. Acts as a component of the TACC3/ch-TOG/clathrin complex proposed to contribute to stabilization of kinetochore fibers of the mitotic spindle by acting as inter-microtubule bridge. The TACC3/ch-TOG/clathrin complex is required for the maintenance of kinetochore fiber tension. Plays a role in early autophagosome formation. Interaction with DNAJC6 mediates the recruitment of HSPA8 to the clathrin lattice and creates local destabilization of the lattice promoting uncoating. The sequence is that of Clathrin heavy chain 1 from Rattus norvegicus (Rat).